We begin with the raw amino-acid sequence, 360 residues long: Xanthohumol 4-O-methyltransferase (360 aa).

D227 serves as a coordination point for S-adenosyl-L-methionine. H266 functions as the Proton acceptor in the catalytic mechanism.

This sequence belongs to the class I-like SAM-binding methyltransferase superfamily. Cation-independent O-methyltransferase family. Homodimer. In terms of tissue distribution, highly expressed in lupulin glands. Detected in cones, male flowers and roots.

It is found in the cytoplasm. It carries out the reaction xanthohumol + S-adenosyl-L-methionine = 4-O-methylxanthohumol + S-adenosyl-L-homocysteine + H(+). The enzyme catalyses desmethylxanthohumol + S-adenosyl-L-methionine = xanthohumol + S-adenosyl-L-homocysteine + H(+). It catalyses the reaction isoliquiritigenin + S-adenosyl-L-methionine = 2'-O-methylisoliquiritigenin + S-adenosyl-L-homocysteine + H(+). The catalysed reaction is trans-resveratrol + S-adenosyl-L-methionine = 3-methoxy-4',5-dihydroxy-trans-stilbene + S-adenosyl-L-homocysteine + H(+). It participates in secondary metabolite biosynthesis. Inhibited by S-adenosyl homocysteine. In terms of biological role, involved in the biosynthesis of prenylated phenolics natural products which contribute to the bitter taste of beer and display broad biological activities. O-methyltransferase with a low substrate selectivity. Methylates chalconaringenin, desmethylxanthohumol, xanthohumol, isoliquiritigenin, butein, 2',4-dihydroxychalcone, resveratrol, genistein and guaiacol. Catalyzes the biosynthesis of 2',4'-dihydroxy-4,6'-dimethoxy-3'-prenylchalcone (4-O-methylxanthohumol). The protein is Xanthohumol 4-O-methyltransferase of Humulus lupulus (European hop).